Here is an 86-residue protein sequence, read N- to C-terminus: uncharacterized protein (86 aa).

3 helical membrane passes run 4 to 24, 34 to 54, and 64 to 84; these read ILII…IAAV, MGLV…ILIN, and DIAY…ARVL.

It to M.jannaschii MJ1223.

The protein localises to the cell membrane. This is an uncharacterized protein from Methanothermobacter thermautotrophicus (strain ATCC 29096 / DSM 1053 / JCM 10044 / NBRC 100330 / Delta H) (Methanobacterium thermoautotrophicum).